A 440-amino-acid chain; its full sequence is Tol-Pal system protein TolB (440 aa).

An N-terminal signal peptide occupies residues 1 to 21; the sequence is MKIFGKWLLVTLLICSMPVKA.

The protein belongs to the TolB family. The Tol-Pal system is composed of five core proteins: the inner membrane proteins TolA, TolQ and TolR, the periplasmic protein TolB and the outer membrane protein Pal. They form a network linking the inner and outer membranes and the peptidoglycan layer.

It localises to the periplasm. Functionally, part of the Tol-Pal system, which plays a role in outer membrane invagination during cell division and is important for maintaining outer membrane integrity. In Shewanella halifaxensis (strain HAW-EB4), this protein is Tol-Pal system protein TolB.